The chain runs to 356 residues: MTRLTLALDVMGGDFGPSVTVPAALQALNSNSQLTLLLVGNSDAITPLLAKADFEQRSRLQIIPAQSVIASDARPSQAIRASRGSSMRVALELVKEGRAQACVSAGNTGALMGLAKLLLKPLEGIERPALVTVLPHQQKGKTVVLDLGANVDCDSTMLVQFAIMGSVLAEEVVEIPNPRVALLNIGEEEVKGLDSIRDASAVLKTIPSINYIGYLEANELLTGKTDVLVCDGFTGNVTLKTMEGVVRMFLSLLKSQGEGKKRSWWLLLLKRWLQKSLTRRFSHLNPDQYNGACLLGLRGTVIKSHGAANQRAFAVAIEQAVQAVQRQVPQRIAARLESVYPAGFELLDGGKSGTLR.

It belongs to the PlsX family. As to quaternary structure, homodimer. Probably interacts with PlsY.

Its subcellular location is the cytoplasm. The enzyme catalyses a fatty acyl-[ACP] + phosphate = an acyl phosphate + holo-[ACP]. It participates in lipid metabolism; phospholipid metabolism. Functionally, catalyzes the reversible formation of acyl-phosphate (acyl-PO(4)) from acyl-[acyl-carrier-protein] (acyl-ACP). This enzyme utilizes acyl-ACP as fatty acyl donor, but not acyl-CoA. In Escherichia coli (strain K12 / DH10B), this protein is Phosphate acyltransferase.